A 273-amino-acid polypeptide reads, in one-letter code: Hydroxyethylthiazole kinase (273 aa).

Position 49 (Met-49) interacts with substrate. ATP contacts are provided by Lys-125 and Thr-171. Gly-198 contributes to the substrate binding site.

This sequence belongs to the Thz kinase family. Requires Mg(2+) as cofactor.

It carries out the reaction 5-(2-hydroxyethyl)-4-methylthiazole + ATP = 4-methyl-5-(2-phosphooxyethyl)-thiazole + ADP + H(+). It participates in cofactor biosynthesis; thiamine diphosphate biosynthesis; 4-methyl-5-(2-phosphoethyl)-thiazole from 5-(2-hydroxyethyl)-4-methylthiazole: step 1/1. Functionally, catalyzes the phosphorylation of the hydroxyl group of 4-methyl-5-beta-hydroxyethylthiazole (THZ). This Natranaerobius thermophilus (strain ATCC BAA-1301 / DSM 18059 / JW/NM-WN-LF) protein is Hydroxyethylthiazole kinase.